The sequence spans 236 residues: RNA-binding protein 24 (236 aa).

Positions 11–88 (TKIFVGGLPY…RKANVNLAYL (78 aa)) constitute an RRM domain. The tract at residues 175–199 (QYPYAASPAAAGYVTAGGYGYAVQQ) is necessary for interaction with EIF4E.

As to quaternary structure, interacts with EIF4E; this interaction prevents EIF4E from binding to p53/TP53 mRNA and inhibits the assembly of translation initiation complex. (Microbial infection) Interacts with HCV mature core protein; this interaction, which enhances the interaction of Core with 5'-UTR may favor viral replication over translation. In terms of assembly, (Microbial infection) Interacts with HCV Serine protease/helicase NS3. Expressed in fetal and adult heart and skeletal muscles.

It localises to the nucleus. The protein localises to the cytoplasm. Its function is as follows. Multifunctional RNA-binding protein involved in the regulation of pre-mRNA splicing, mRNA stability and mRNA translation important for cell fate decision and differentiation. Plays a major role in pre-mRNA alternative splicing regulation. Mediates preferentially muscle-specific exon inclusion in numerous mRNAs important for striated cardiac and skeletal muscle cell differentiation. Binds to intronic splicing enhancer (ISE) composed of stretches of GU-rich motifs localized in flanking intron of exon that will be included by alternative splicing. Involved in embryonic stem cell (ESC) transition to cardiac cell differentiation by promoting pre-mRNA alternative splicing events of several pluripotency and/or differentiation genes. Plays a role in the regulation of mRNA stability. Binds to 3'-untranslated region (UTR) AU-rich elements in target transcripts, such as CDKN1A and MYOG, leading to maintain their stabilities. Involved in myogenic differentiation by regulating MYOG levels. Binds to multiple regions in the mRNA 3'-UTR of TP63 isoform 2, hence inducing its destabilization. Also promotes the destabilization of the CHRM2 mRNA via its binding to a region in the coding sequence. Plays a role in the regulation of mRNA translation. Mediates repression of p53/TP53 mRNA translation through its binding to U-rich element in the 3'-UTR, hence preventing EIF4E from binding to p53/TP53 mRNA and translation initiation. Binds to a huge amount of mRNAs. Required for embryonic heart development, sarcomer and M-band formation in striated muscles. Together with RBM20, promotes the expression of short isoforms of PDLIM5/ENH in cardiomyocytes. (Microbial infection) Promotes hepatitis C virus (HCV) replication over translation through the inhibition of viral protein expression. Decreases viral translation by linking viral 5'- and 3'-UTRs, blocking 80S ribosome assembly on the viral IRES and enhancing the interaction of the mature core protein and 5'-UTR. The sequence is that of RNA-binding protein 24 from Homo sapiens (Human).